Reading from the N-terminus, the 466-residue chain is Zinc finger and SCAN domain-containing protein 26 (466 aa).

K21 participates in a covalent cross-link: Glycyl lysine isopeptide (Lys-Gly) (interchain with G-Cter in SUMO2). The SCAN box domain occupies 42–124 (CKQFRQLRYE…GILEDLQLDR (83 aa)). Composition is skewed to basic and acidic residues over residues 124-135 (RGKAGEQKDSAQ) and 163-173 (KPEERGKETRS). The disordered stretch occupies residues 124–182 (RGKAGEQKDSAQRSRPTVLVGEPAPRREAREQPGCALPQKPEERGKETRSENGNLIAGT). The segment at 220–242 (SQCLETKERLVQNSGLIEHDRAH) adopts a C2H2-type 1; degenerate zinc-finger fold. 7 consecutive C2H2-type zinc fingers follow at residues 270 to 292 (HPCQ…QKIH), 298 to 320 (YQCK…LRIH), 326 to 348 (YLCI…QKIH), 354 to 376 (RECK…QRVH), 382 to 404 (HHCN…HRIH), 410 to 432 (FKCN…VRIH), and 438 to 460 (YKCS…QRHH).

It localises to the nucleus. Its function is as follows. May be involved in transcriptional regulation. The protein is Zinc finger and SCAN domain-containing protein 26 (Zscan26) of Mus musculus (Mouse).